A 58-amino-acid polypeptide reads, in one-letter code: Metallothionein-2B (58 aa).

Residues 1 to 29 form a beta region; sequence MPDPCCNDKCECKEGECKTGCKCKSCRCP. Positions 5, 6, 10, 12, 17, 21, 23, 26, 28, 31, 34, 38, 40, 46, 50, 54, 56, and 57 each coordinate a divalent metal cation. Residues 30–58 are alpha; that stretch reads PCDKCSSECKCTSKEECSKTCSKPCSCCP.

Belongs to the metallothionein superfamily. Type 3 family.

Functionally, binds six divalent metal ions. Known to bind copper and cadmium. The sequence is that of Metallothionein-2B from Callinectes sapidus (Blue crab).